We begin with the raw amino-acid sequence, 183 residues long: ATP synthase subunit delta (183 aa).

This sequence belongs to the ATPase delta chain family. As to quaternary structure, F-type ATPases have 2 components, F(1) - the catalytic core - and F(0) - the membrane proton channel. F(1) has five subunits: alpha(3), beta(3), gamma(1), delta(1), epsilon(1). F(0) has three main subunits: a(1), b(2) and c(10-14). The alpha and beta chains form an alternating ring which encloses part of the gamma chain. F(1) is attached to F(0) by a central stalk formed by the gamma and epsilon chains, while a peripheral stalk is formed by the delta and b chains.

The protein resides in the cell inner membrane. F(1)F(0) ATP synthase produces ATP from ADP in the presence of a proton or sodium gradient. F-type ATPases consist of two structural domains, F(1) containing the extramembraneous catalytic core and F(0) containing the membrane proton channel, linked together by a central stalk and a peripheral stalk. During catalysis, ATP synthesis in the catalytic domain of F(1) is coupled via a rotary mechanism of the central stalk subunits to proton translocation. Functionally, this protein is part of the stalk that links CF(0) to CF(1). It either transmits conformational changes from CF(0) to CF(1) or is implicated in proton conduction. The protein is ATP synthase subunit delta of Ruthia magnifica subsp. Calyptogena magnifica.